The sequence spans 434 residues: DENN domain-containing protein 11 (434 aa).

Residues 1–29 (MARRTDRAPLLDWAEGPGVSPAPETEQGE) are disordered. The 168-residue stretch at 1-168 (MARRTDRAPL…QLEIPGHYTP (168 aa)) folds into the uDENN domain. One can recognise a cDENN domain in the interval 194–341 (LPPVHKHLYP…VNSADKEKYQ (148 aa)). A dDENN domain is found at 343-434 (LNDQRQLLMY…MLVIDNPCCP (92 aa)).

It belongs to the DENND11 family.

Functionally, probable guanine nucleotide exchange factor (GEF). May promote the exchange of GDP to GTP, converting inactive GDP-bound small GTPases into their active GTP-bound form. In Xenopus laevis (African clawed frog), this protein is DENN domain-containing protein 11 (dennd11).